A 93-amino-acid chain; its full sequence is Co-chaperonin GroES (93 aa).

It belongs to the GroES chaperonin family. As to quaternary structure, heptamer of 7 subunits arranged in a ring. Interacts with the chaperonin GroEL.

The protein resides in the cytoplasm. In terms of biological role, together with the chaperonin GroEL, plays an essential role in assisting protein folding. The GroEL-GroES system forms a nano-cage that allows encapsulation of the non-native substrate proteins and provides a physical environment optimized to promote and accelerate protein folding. GroES binds to the apical surface of the GroEL ring, thereby capping the opening of the GroEL channel. This chain is Co-chaperonin GroES, found in Streptococcus gordonii.